A 440-amino-acid polypeptide reads, in one-letter code: FAD-dependent monooxygenase FVEG_08293 (440 aa).

A helical membrane pass occupies residues 7–26; the sequence is EFNVAIVGAGVAGLALAMAL. FAD-binding residues include Glu37 and Gly50. N-linked (GlcNAc...) asparagine glycosylation is present at Asn77. Arg122 lines the FAD pocket. Active-site residues include Arg203 and Tyr235. FAD contacts are provided by Asp317 and Ala330.

The protein belongs to the paxM FAD-dependent monooxygenase family. Requires FAD as cofactor.

It is found in the membrane. FAD-dependent monooxygenase; part of the Fusarium detoxification of benzoxazolinone cluster 1 (FDB1) involved in the degradation of benzoxazolinones produced by the host plant. Maize, wheat, and rye produce the 2 benzoxazinone phytoanticipins 2,4-dihy-droxy-7-methoxy-1,4-benzoxazin-3-one (DIMBOA) and 2,4-dihydroxy-1,4-benzoxazin-3-one (DIBOA) that, due to their inherent instability once released, spontaneously degrade to the more stable corresponding benzoxazolinones, 6-methoxy-2-benzoxazolinone (MBOA) and 2-benzoxazolinone (BOA), respectively. The first step in the detoxification of benzoxazolinones involves the hydrolysis of the cyclic ester bond of benzoxazolinones by the FDB1 cluster gamma-lactamase MBL1 to aminophenols. MBL1 is able to convert BOA into 2-aminophenol (2-AP), as well as MBOA into 5-methoxy-2-aminophenol (2-AMP). The FDB2 cluster N-malonyltransferase FDB2/NAT1 then metabolizes aminophenols via N-malonylation to non-toxic malonamic acids. FDB2/NAT1 converts 2-AP into N-(2-hydroxyphenyl) malonamic acid (HPMA) and 2-AMP into N-(2-hydroxy-4-methoxyphenyl) malonamic acid (HMPMA). The duplicated dienlactone hydrolases DLH1 and DLH2 may provide redundant function for hydrolyzing the lactone moiety in the BOA molecule. The roles of the amidases an other enzymes encoded by the 2 FDB clusters have not been identified so far. In Gibberella moniliformis (strain M3125 / FGSC 7600) (Maize ear and stalk rot fungus), this protein is FAD-dependent monooxygenase FVEG_08293.